The following is a 354-amino-acid chain: Methylthioribose-1-phosphate isomerase (354 aa).

Substrate-binding positions include 54-56, Arg97, and Gln204; that span reads RGA. The active-site Proton donor is Asp245. 255-256 contributes to the substrate binding site; the sequence is NK.

The protein belongs to the eIF-2B alpha/beta/delta subunits family. MtnA subfamily.

It catalyses the reaction 5-(methylsulfanyl)-alpha-D-ribose 1-phosphate = 5-(methylsulfanyl)-D-ribulose 1-phosphate. Its pathway is amino-acid biosynthesis; L-methionine biosynthesis via salvage pathway; L-methionine from S-methyl-5-thio-alpha-D-ribose 1-phosphate: step 1/6. Its function is as follows. Catalyzes the interconversion of methylthioribose-1-phosphate (MTR-1-P) into methylthioribulose-1-phosphate (MTRu-1-P). This chain is Methylthioribose-1-phosphate isomerase, found in Albidiferax ferrireducens (strain ATCC BAA-621 / DSM 15236 / T118) (Rhodoferax ferrireducens).